We begin with the raw amino-acid sequence, 257 residues long: UPF0246 protein BT_3869 (257 aa).

Belongs to the UPF0246 family.

This chain is UPF0246 protein BT_3869, found in Bacteroides thetaiotaomicron (strain ATCC 29148 / DSM 2079 / JCM 5827 / CCUG 10774 / NCTC 10582 / VPI-5482 / E50).